A 132-amino-acid chain; its full sequence is CLAVATA3/ESR (CLE)-related protein 2-B (132 aa).

Positions 1-26 (MASRMGMVAILSLFVCALVASTSVNA) are cleaved as a signal peptide. The tract at residues 68–132 (NRASKQLDRE…IGPPPFLDRY (65 aa)) is disordered. Residues Pro-82 and Pro-85 each carry the hydroxyproline modification. An O-linked (Ara...) hydroxyproline glycan is attached at Pro-85.

The protein belongs to the CLV3/ESR signal peptide family. In terms of processing, the O-glycosylation (arabinosylation) of the hydroxyproline Pro-85 enhances binding affinity of the ESR2Bp peptide for its receptor. Seed endosperm.

It localises to the secreted. The protein resides in the extracellular space. Extracellular signal peptide that regulates cell fate. This Zea mays (Maize) protein is CLAVATA3/ESR (CLE)-related protein 2-B.